A 370-amino-acid polypeptide reads, in one-letter code: Queuine tRNA-ribosyltransferase (370 aa).

The Proton acceptor role is filled by Asp-89. Residues 89-93, Asp-143, Gln-185, and Gly-212 each bind substrate; that span reads DSGGF. Residues 243–249 form an RNA binding region; sequence GVGKPED. Asp-262 functions as the Nucleophile in the catalytic mechanism. Positions 267 to 271 are RNA binding; important for wobble base 34 recognition; sequence TRNAR. 4 residues coordinate Zn(2+): Cys-300, Cys-302, Cys-305, and His-331.

It belongs to the queuine tRNA-ribosyltransferase family. Homodimer. Within each dimer, one monomer is responsible for RNA recognition and catalysis, while the other monomer binds to the replacement base PreQ1. Requires Zn(2+) as cofactor.

The catalysed reaction is 7-aminomethyl-7-carbaguanine + guanosine(34) in tRNA = 7-aminomethyl-7-carbaguanosine(34) in tRNA + guanine. The protein operates within tRNA modification; tRNA-queuosine biosynthesis. In terms of biological role, catalyzes the base-exchange of a guanine (G) residue with the queuine precursor 7-aminomethyl-7-deazaguanine (PreQ1) at position 34 (anticodon wobble position) in tRNAs with GU(N) anticodons (tRNA-Asp, -Asn, -His and -Tyr). Catalysis occurs through a double-displacement mechanism. The nucleophile active site attacks the C1' of nucleotide 34 to detach the guanine base from the RNA, forming a covalent enzyme-RNA intermediate. The proton acceptor active site deprotonates the incoming PreQ1, allowing a nucleophilic attack on the C1' of the ribose to form the product. After dissociation, two additional enzymatic reactions on the tRNA convert PreQ1 to queuine (Q), resulting in the hypermodified nucleoside queuosine (7-(((4,5-cis-dihydroxy-2-cyclopenten-1-yl)amino)methyl)-7-deazaguanosine). This is Queuine tRNA-ribosyltransferase from Hydrogenovibrio crunogenus (strain DSM 25203 / XCL-2) (Thiomicrospira crunogena).